Reading from the N-terminus, the 529-residue chain is L-ornithine N(5)-monooxygenase (529 aa).

FAD contacts are provided by residues 100-108 (EKQPQFAWH) and Q119. K124 serves as a coordination point for substrate. V185 lines the FAD pocket. 270 to 273 (NGQS) is an NADP(+) binding site. Substrate contacts are provided by residues 309–312 (NEIF) and N339. An NADP(+)-binding site is contributed by 339–341 (NYG). Position 493–495 (493–495 (TLL)) interacts with FAD. S496 serves as a coordination point for substrate.

This sequence belongs to the lysine N(6)-hydroxylase/L-ornithine N(5)-oxygenase family. In terms of assembly, homotetramer. It depends on FAD as a cofactor.

The catalysed reaction is L-ornithine + NADPH + O2 = N(5)-hydroxy-L-ornithine + NADP(+) + H2O. It carries out the reaction L-ornithine + NADH + O2 = N(5)-hydroxy-L-ornithine + NAD(+) + H2O. It participates in siderophore biosynthesis. In terms of biological role, L-ornithine N(5)-monooxygenase; part of the gene cluster that mediates the biosynthesis of hydroxamate-containing siderophores that play a critical role in virulence. Cochliobolus heterostrophus produces extracellular coprogen-type siderophores including coprogen, neocoprogen I and neocoprogen II, as well as the intracellular siderophore ferricrocin. The role of extracellular siderophores is to supply iron to their producers in planta and the intracellular ferricrocin is required for intracellular iron distribution and storage with a crucial role in ascus and ascospore development. SIDA2 catalyzes the conversion of L-ornithine to N(5)-hydroxyornithine, the first step in the biosynthesis of all hydroxamate-containing siderophores. The assembly of extracellular coprogen-type siderophores is then performed by the nonribosomal peptide synthetase (NRPS) NPS6 whereas the intracellular siderophore ferricrocin is assembled by NPS2. The chain is L-ornithine N(5)-monooxygenase from Cochliobolus heterostrophus (strain C4 / ATCC 48331 / race T) (Southern corn leaf blight fungus).